The primary structure comprises 222 residues: Large ribosomal subunit protein bL25 (222 aa).

Belongs to the bacterial ribosomal protein bL25 family. CTC subfamily. Part of the 50S ribosomal subunit; part of the 5S rRNA/L5/L18/L25 subcomplex. Contacts the 5S rRNA. Binds to the 5S rRNA independently of L5 and L18.

In terms of biological role, this is one of the proteins that binds to the 5S RNA in the ribosome where it forms part of the central protuberance. The polypeptide is Large ribosomal subunit protein bL25 (Ruthia magnifica subsp. Calyptogena magnifica).